Consider the following 275-residue polypeptide: Lectin (275 aa).

The N-terminal stretch at 1–30 is a signal peptide; it reads MASLQTQMISFYAIFLSILLTTILFFKVNS. The Mn(2+) site is built by Glu149 and Asp151. Ca(2+) is bound by residues Asp151, Phe153, Asn155, and Asp159. Mn(2+)-binding residues include Asp159 and His166. Asn217 is a glycosylation site (N-linked (GlcNAc...) asparagine).

This sequence belongs to the leguminous lectin family. As to quaternary structure, tetramer of two alpha and two beta chains.

Functionally, D-mannose specific lectin. This chain is Lectin (LECA), found in Pisum sativum (Garden pea).